The following is a 139-amino-acid chain: Transcription antitermination protein NusB (139 aa).

It belongs to the NusB family.

Its function is as follows. Involved in transcription antitermination. Required for transcription of ribosomal RNA (rRNA) genes. Binds specifically to the boxA antiterminator sequence of the ribosomal RNA (rrn) operons. This chain is Transcription antitermination protein NusB, found in Limosilactobacillus fermentum (strain NBRC 3956 / LMG 18251) (Lactobacillus fermentum).